We begin with the raw amino-acid sequence, 282 residues long: Bifunctional protein FolD (282 aa).

Residues asparagine 165–serine 167, serine 190, and isoleucine 231 contribute to the NADP(+) site.

This sequence belongs to the tetrahydrofolate dehydrogenase/cyclohydrolase family. In terms of assembly, homodimer.

It carries out the reaction (6R)-5,10-methylene-5,6,7,8-tetrahydrofolate + NADP(+) = (6R)-5,10-methenyltetrahydrofolate + NADPH. It catalyses the reaction (6R)-5,10-methenyltetrahydrofolate + H2O = (6R)-10-formyltetrahydrofolate + H(+). It participates in one-carbon metabolism; tetrahydrofolate interconversion. Catalyzes the oxidation of 5,10-methylenetetrahydrofolate to 5,10-methenyltetrahydrofolate and then the hydrolysis of 5,10-methenyltetrahydrofolate to 10-formyltetrahydrofolate. In Clostridium botulinum (strain ATCC 19397 / Type A), this protein is Bifunctional protein FolD.